Consider the following 234-residue polypeptide: UPF0502 protein Bphyt_5265 (234 aa).

This sequence belongs to the UPF0502 family.

The protein is UPF0502 protein Bphyt_5265 of Paraburkholderia phytofirmans (strain DSM 17436 / LMG 22146 / PsJN) (Burkholderia phytofirmans).